Consider the following 207-residue polypeptide: Claudin-11 (207 aa).

M1 is a topological domain (cytoplasmic). A helical membrane pass occupies residues 2 to 22 (VATCLQVVGFVTSFVGWIGVI). Residues 23 to 82 (VTTSTNDWVVTCGYTIPTCRKLDELGSKGLWADCVMATGLYHCKPLVDILILPGYVQACR) are Extracellular-facing. A helical transmembrane segment spans residues 83 to 103 (ALMIAASVLGLPAILLLLTVL). Over 104–122 (PCIRMGQEPGVAKYRRAQL) the chain is Cytoplasmic. Residues 123–143 (AGVLLILLALCALVATIWFPV) traverse the membrane as a helical segment. The Extracellular portion of the chain corresponds to 144–157 (CAHRETTIVSFGYS). A helical membrane pass occupies residues 158–178 (LYAGWIGAVLCLVGGCVILCC). Topologically, residues 179-207 (AGDAQAFGENRFYYTAGSSSPTHAKSAHV) are cytoplasmic. A phosphoserine mark is found at S197 and S198.

This sequence belongs to the claudin family. In terms of assembly, interacts with tetraspanin-3/TSPAN3. Interacts with OCLN.

The protein localises to the cell junction. The protein resides in the tight junction. It is found in the cell membrane. Its function is as follows. Plays a major role in tight junction-specific obliteration of the intercellular space, through calcium-independent cell-adhesion activity. This Homo sapiens (Human) protein is Claudin-11 (CLDN11).